The following is a 92-amino-acid chain: Sperm-specific protein Phi-1 (92 aa).

Residues 1–92 form a disordered region; sequence MPSPTRRSSK…RVRAKKKKKK (92 aa). 2 stretches are compositionally biased toward basic residues: residues 7–19 and 29–92; these read RSSKSRSKSRSRS and AAKR…KKKK.

As to expression, sperm.

It localises to the nucleus. The protein localises to the chromosome. Involved in nuclear basic protein transition: histones are replaced by spermatid specific proteins which are themselves replaced by protamines in late spermatids. This is Sperm-specific protein Phi-1 from Mytilus edulis (Blue mussel).